Consider the following 443-residue polypeptide: Ribulose bisphosphate carboxylase large chain (443 aa).

The substrate site is built by Asn89 and Thr139. The active-site Proton acceptor is Lys141. Lys143 is a substrate binding site. Residues Lys167, Asp169, and Glu170 each coordinate Mg(2+). The residue at position 167 (Lys167) is an N6-carboxylysine. His260 serves as the catalytic Proton acceptor. Arg261, His293, and Ser345 together coordinate substrate.

It belongs to the RuBisCO large chain family. Type I subfamily. As to quaternary structure, heterohexadecamer of 8 large chains and 8 small chains; disulfide-linked. The disulfide link is formed within the large subunit homodimers. Mg(2+) serves as cofactor. The disulfide bond which can form in the large chain dimeric partners within the hexadecamer appears to be associated with oxidative stress and protein turnover.

The protein resides in the plastid. The protein localises to the chloroplast. It catalyses the reaction 2 (2R)-3-phosphoglycerate + 2 H(+) = D-ribulose 1,5-bisphosphate + CO2 + H2O. The enzyme catalyses D-ribulose 1,5-bisphosphate + O2 = 2-phosphoglycolate + (2R)-3-phosphoglycerate + 2 H(+). Its function is as follows. RuBisCO catalyzes two reactions: the carboxylation of D-ribulose 1,5-bisphosphate, the primary event in carbon dioxide fixation, as well as the oxidative fragmentation of the pentose substrate in the photorespiration process. Both reactions occur simultaneously and in competition at the same active site. This Antirrhinum majus (Garden snapdragon) protein is Ribulose bisphosphate carboxylase large chain.